The following is a 100-amino-acid chain: Small ribosomal subunit protein bS21 (100 aa).

A disordered region spans residues 61–100 (KLQREGLLPMKPKPVFGAGPGGDRGRGPAAGAGAGPRGPR). Positions 78–100 (AGPGGDRGRGPAAGAGAGPRGPR) are enriched in gly residues.

It belongs to the bacterial ribosomal protein bS21 family.

The polypeptide is Small ribosomal subunit protein bS21 (Rhodopseudomonas palustris (strain BisB18)).